The primary structure comprises 486 residues: UDP-N-acetylmuramate--L-alanine ligase (486 aa).

126–132 (GTHGKTS) is a binding site for ATP.

The protein belongs to the MurCDEF family.

The protein resides in the cytoplasm. The enzyme catalyses UDP-N-acetyl-alpha-D-muramate + L-alanine + ATP = UDP-N-acetyl-alpha-D-muramoyl-L-alanine + ADP + phosphate + H(+). Its pathway is cell wall biogenesis; peptidoglycan biosynthesis. Functionally, cell wall formation. The chain is UDP-N-acetylmuramate--L-alanine ligase from Corynebacterium glutamicum (strain ATCC 13032 / DSM 20300 / JCM 1318 / BCRC 11384 / CCUG 27702 / LMG 3730 / NBRC 12168 / NCIMB 10025 / NRRL B-2784 / 534).